Consider the following 77-residue polypeptide: U10-lycotoxin-Ls1a (77 aa).

An N-terminal signal peptide occupies residues 1-20 (MKLIIFTGLVLFAIVSLIEA). Residues 21-26 (EEESGR) constitute a propeptide that is removed on maturation.

This sequence belongs to the neurotoxin 19 (CSTX) family. 09 (U10-Lctx) subfamily. Contains 4 disulfide bonds. Expressed by the venom gland.

The protein resides in the secreted. The sequence is that of U10-lycotoxin-Ls1a from Lycosa singoriensis (Wolf spider).